We begin with the raw amino-acid sequence, 382 residues long: Alpha-2B adrenergic receptor (382 aa).

The helical transmembrane segment at 1–25 threads the bilayer; sequence AIAAVITFLILFTIFGNALVILAVL. Topologically, residues 26–36 are cytoplasmic; sequence TSRSLRAPQNL. The chain crosses the membrane as a helical span at residues 37 to 62; it reads FLVSLAAADILVATLIIPFSLANELL. Topologically, residues 63–72 are extracellular; sequence GYWYFRHTWC. A disulfide bridge connects residues Cys-72 and Cys-151. A helical transmembrane segment spans residues 73-95; it reads EVYLALDVLFCTSSIVHLCAISL. The Cytoplasmic portion of the chain corresponds to 96-117; it reads DRYWSVSRALEYNSKRTPRRIK. Residues 118–140 traverse the membrane as a helical segment; sequence GIILTVWLIAAFISLPPLIYKGD. The Extracellular segment spans residues 141-156; the sequence is KGKKPGGRPQCKLNEE. A helical membrane pass occupies residues 157–180; it reads AWYILSSSIGSFFAPCLIMILVYL. The Cytoplasmic portion of the chain corresponds to 181 to 346; it reads RIYLIAKRRN…MNREKRFTFV (166 aa). The disordered stretch occupies residues 192–305; it reads QGPHGKQAPG…QGTPNFQPSQ (114 aa). Residues 271–284 show a composition bias toward acidic residues; it reads EEEEEEEEEEEEEC. A compositionally biased stretch (polar residues) spans 291–305; that stretch reads TSSSLQGTPNFQPSQ. Residues 347 to 370 form a helical membrane-spanning segment; that stretch reads LAVVIGVFVLCWFPFFFSYSLGAI. At 371 to 379 the chain is on the extracellular side; it reads CPQHCKVPH. The chain crosses the membrane as a helical span at residues 380–382; that stretch reads GLF.

This sequence belongs to the G-protein coupled receptor 1 family. Adrenergic receptor subfamily. ADRA2B sub-subfamily. As to quaternary structure, interacts with RAB26. Interacts with PPP1R9B. Interacts with GGA1, GGA2 and GGA3.

The protein resides in the cell membrane. Its function is as follows. Alpha-2 adrenergic receptors mediate the catecholamine-induced inhibition of adenylate cyclase through the action of G proteins. The polypeptide is Alpha-2B adrenergic receptor (ADRA2B) (Didelphis virginiana (North American opossum)).